The primary structure comprises 128 residues: MILGLGLDVVEVARIQRILAGPPARAERFLARVFAPSERAYCDARQDRATRYAARFAAKEAAVKALGTPEGVRWLDLVVERGSGAPSLALDGLAADAARRLGVARVHLTLTHDAGVAVAAVILEGTGP.

The Mg(2+) site is built by Asp-8 and Glu-60.

This sequence belongs to the P-Pant transferase superfamily. AcpS family. Requires Mg(2+) as cofactor.

The protein localises to the cytoplasm. The catalysed reaction is apo-[ACP] + CoA = holo-[ACP] + adenosine 3',5'-bisphosphate + H(+). In terms of biological role, transfers the 4'-phosphopantetheine moiety from coenzyme A to a Ser of acyl-carrier-protein. The chain is Holo-[acyl-carrier-protein] synthase from Anaeromyxobacter sp. (strain K).